The following is a 308-amino-acid chain: HPr kinase/phosphorylase (308 aa).

Active-site residues include histidine 138 and lysine 159. Glycine 153–serine 160 is a binding site for ATP. Serine 160 contributes to the Mg(2+) binding site. Aspartate 177 serves as the catalytic Proton acceptor; for phosphorylation activity. Proton donor; for dephosphorylation activity. The segment at leucine 201–aspartate 210 is important for the catalytic mechanism of both phosphorylation and dephosphorylation. Glutamate 202 is a binding site for Mg(2+). Arginine 243 is an active-site residue. The interval glutamine 264–arginine 269 is important for the catalytic mechanism of dephosphorylation.

Belongs to the HPrK/P family. In terms of assembly, homohexamer. The cofactor is Mg(2+).

The enzyme catalyses [HPr protein]-L-serine + ATP = [HPr protein]-O-phospho-L-serine + ADP + H(+). It catalyses the reaction [HPr protein]-O-phospho-L-serine + phosphate + H(+) = [HPr protein]-L-serine + diphosphate. In terms of biological role, catalyzes the ATP- as well as the pyrophosphate-dependent phosphorylation of a specific serine residue in HPr, a phosphocarrier protein of the phosphoenolpyruvate-dependent sugar phosphotransferase system (PTS). HprK/P also catalyzes the pyrophosphate-producing, inorganic phosphate-dependent dephosphorylation (phosphorolysis) of seryl-phosphorylated HPr (P-Ser-HPr). This chain is HPr kinase/phosphorylase, found in Bordetella avium (strain 197N).